The primary structure comprises 351 residues: Phospho-N-acetylmuramoyl-pentapeptide-transferase (351 aa).

The next 10 helical transmembrane spans lie at Thr-17–Ser-37, Met-61–Ile-83, Ile-88–Phe-105, Ile-130–Ile-150, Ser-158–Ala-178, Gly-190–Thr-210, Leu-230–Tyr-250, Ile-254–Ile-274, Ile-279–Val-299, and Gln-328–Ile-348.

The protein belongs to the glycosyltransferase 4 family. MraY subfamily. It depends on Mg(2+) as a cofactor.

The protein resides in the cell inner membrane. It carries out the reaction UDP-N-acetyl-alpha-D-muramoyl-L-alanyl-gamma-D-glutamyl-meso-2,6-diaminopimeloyl-D-alanyl-D-alanine + di-trans,octa-cis-undecaprenyl phosphate = di-trans,octa-cis-undecaprenyl diphospho-N-acetyl-alpha-D-muramoyl-L-alanyl-D-glutamyl-meso-2,6-diaminopimeloyl-D-alanyl-D-alanine + UMP. The protein operates within cell wall biogenesis; peptidoglycan biosynthesis. In terms of biological role, catalyzes the initial step of the lipid cycle reactions in the biosynthesis of the cell wall peptidoglycan: transfers peptidoglycan precursor phospho-MurNAc-pentapeptide from UDP-MurNAc-pentapeptide onto the lipid carrier undecaprenyl phosphate, yielding undecaprenyl-pyrophosphoryl-MurNAc-pentapeptide, known as lipid I. This chain is Phospho-N-acetylmuramoyl-pentapeptide-transferase, found in Borrelia duttonii (strain Ly).